The sequence spans 159 residues: Globin CTT-W (159 aa).

The signal sequence occupies residues 1–16; sequence MKFLVILTLCIAGAIA. A Globin domain is found at 17-159; sequence HCDKAPFIKA…HHAIVYSILE (143 aa). Heme b is bound by residues histidine 73 and histidine 108.

Belongs to the globin family.

This is Globin CTT-W (CTT-W) from Chironomus thummi piger (Midge).